A 197-amino-acid polypeptide reads, in one-letter code: Imidazoleglycerol-phosphate dehydratase (197 aa).

The protein belongs to the imidazoleglycerol-phosphate dehydratase family.

It is found in the cytoplasm. The enzyme catalyses D-erythro-1-(imidazol-4-yl)glycerol 3-phosphate = 3-(imidazol-4-yl)-2-oxopropyl phosphate + H2O. It participates in amino-acid biosynthesis; L-histidine biosynthesis; L-histidine from 5-phospho-alpha-D-ribose 1-diphosphate: step 6/9. This Erythrobacter litoralis (strain HTCC2594) protein is Imidazoleglycerol-phosphate dehydratase.